The following is a 406-amino-acid chain: uncharacterized protein (406 aa).

This is an uncharacterized protein from Acanthamoeba polyphaga mimivirus (APMV).